Consider the following 190-residue polypeptide: Potassium-transporting ATPase KdpC subunit (190 aa).

A helical membrane pass occupies residues 10–30; the sequence is TFIFLLLITGGVYPLLTTVLG.

This sequence belongs to the KdpC family. As to quaternary structure, the system is composed of three essential subunits: KdpA, KdpB and KdpC.

The protein localises to the cell inner membrane. Part of the high-affinity ATP-driven potassium transport (or Kdp) system, which catalyzes the hydrolysis of ATP coupled with the electrogenic transport of potassium into the cytoplasm. This subunit acts as a catalytic chaperone that increases the ATP-binding affinity of the ATP-hydrolyzing subunit KdpB by the formation of a transient KdpB/KdpC/ATP ternary complex. In Shigella dysenteriae serotype 1 (strain Sd197), this protein is Potassium-transporting ATPase KdpC subunit.